Here is a 206-residue protein sequence, read N- to C-terminus: Flavin reductase (NADPH) (206 aa).

Glycine 10, threonine 12, glycine 13, asparagine 14, threonine 15, arginine 35, serine 38, and arginine 39 together coordinate NADP(+). Serine 42 is subject to Phosphoserine. Positions 54, 55, 75, 76, and 78 each coordinate NADP(+). Serine 82 carries the post-translational modification Phosphoserine. 5 residues coordinate NADP(+): methionine 87, cysteine 109, histidine 132, histidine 153, and isoleucine 154. The S-nitroso-cysteine intermediate; for S-nitroso-CoA-dependent nitrosyltransferase activity role is filled by cysteine 109. Cysteine 188 (S-nitroso-cysteine intermediate; for S-nitroso-CoA-dependent nitrosyltransferase activity) is an active-site residue.

As to quaternary structure, monomer. At least expressed in the liver and erythrocyte.

It is found in the cytoplasm. It carries out the reaction reduced riboflavin + NADP(+) = riboflavin + NADPH + 2 H(+). It catalyses the reaction bilirubin IXbeta + NADP(+) = biliverdin IXbeta + NADPH + H(+). The catalysed reaction is FMNH2 + NAD(+) = FMN + NADH + 2 H(+). The enzyme catalyses FMNH2 + NADP(+) = FMN + NADPH + 2 H(+). It carries out the reaction S-nitroso-CoA + L-cysteinyl-[protein] = S-nitroso-L-cysteinyl-[protein] + CoA. It catalyses the reaction L-cysteinyl-[SCAN] + S-nitroso-CoA = S-nitroso-L-cysteinyl-[SCAN] + CoA. The catalysed reaction is S-nitroso-L-cysteinyl-[SCAN] + L-cysteinyl-[protein] = L-cysteinyl-[SCAN] + S-nitroso-L-cysteinyl-[protein]. Enzyme that can both act as a NAD(P)H-dependent reductase and a S-nitroso-CoA-dependent nitrosyltransferase. Promotes fetal heme degradation during development. Also expressed in adult tissues, where it acts as a regulator of hematopoiesis, intermediary metabolism (glutaminolysis, glycolysis, TCA cycle and pentose phosphate pathway) and insulin signaling. Has a broad specificity oxidoreductase activity by catalyzing the NAD(P)H-dependent reduction of a variety of flavins, such as riboflavin, FAD or FMN, biliverdins, methemoglobin and PQQ (pyrroloquinoline quinone). Contributes to fetal heme catabolism by catalyzing reduction of biliverdin IXbeta into bilirubin IXbeta in the liver. Biliverdin IXbeta, which constitutes the major heme catabolite in the fetus is not present in adult. Does not reduce bilirubin IXalpha. Can also reduce the complexed Fe(3+) iron to Fe(2+) in the presence of FMN and NADPH. Acts as a protein nitrosyltransferase by catalyzing nitrosylation of cysteine residues of target proteins, such as HMOX2, INSR and IRS1. S-nitroso-CoA-dependent nitrosyltransferase activity is mediated via a 'ping-pong' mechanism: BLVRB first associates with both S-nitroso-CoA and protein substrate, nitric oxide group is then transferred from S-nitroso-CoA to Cys-109 and Cys-188 residues of BLVRB and from S-nitroso-BLVRB to the protein substrate. Inhibits insulin signaling by mediating nitrosylation of INSR and IRS1, leading to their inhibition. The protein is Flavin reductase (NADPH) (BLVRB) of Bos taurus (Bovine).